A 252-amino-acid polypeptide reads, in one-letter code: Phosphonates import ATP-binding protein PhnC 1 (252 aa).

Residues 2–244 (ISLNKLGVTY…QLEEIYQTLS (243 aa)) form the ABC transporter domain. 35-42 (GSSGAGKS) is a binding site for ATP.

It belongs to the ABC transporter superfamily. Phosphonates importer (TC 3.A.1.9.1) family. As to quaternary structure, the complex is composed of two ATP-binding proteins (PhnC), two transmembrane proteins (PhnE) and a solute-binding protein (PhnD).

The protein localises to the cell inner membrane. The enzyme catalyses phosphonate(out) + ATP + H2O = phosphonate(in) + ADP + phosphate + H(+). Part of the ABC transporter complex PhnCDE involved in phosphonates import. Responsible for energy coupling to the transport system. This Trichodesmium erythraeum (strain IMS101) protein is Phosphonates import ATP-binding protein PhnC 1.